Here is a 249-residue protein sequence, read N- to C-terminus: Putative adhesin RC1281 (249 aa).

The N-terminal stretch at 1–22 (MKKLLLIAAASTALLTSGLSFA) is a signal peptide.

In terms of biological role, adheres to biotinylated epithelial (Vero cell) proteins. The polypeptide is Putative adhesin RC1281 (Rickettsia conorii (strain ATCC VR-613 / Malish 7)).